A 304-amino-acid polypeptide reads, in one-letter code: Protease HtpX homolog (304 aa).

The next 2 helical transmembrane spans lie at 14–34 and 39–59; these read IFII…IGII and YLNG…IMVM. A Zn(2+)-binding site is contributed by His144. Residue Glu145 is part of the active site. Zn(2+) is bound at residue His148. Helical transmembrane passes span 159–179 and 202–222; these read IAIA…RMIF and AIIY…ATAI. Glu231 serves as a coordination point for Zn(2+).

This sequence belongs to the peptidase M48B family. The cofactor is Zn(2+).

The protein localises to the cell membrane. This chain is Protease HtpX homolog, found in Listeria monocytogenes serovar 1/2a (strain ATCC BAA-679 / EGD-e).